The following is a 266-amino-acid chain: Large ribosomal subunit protein eL8 (266 aa).

Glycyl lysine isopeptide (Lys-Gly) (interchain with G-Cter in SUMO2) cross-links involve residues Lys-11, Lys-20, and Lys-21. Lys-34 is modified (N6-acetyllysine). A Glycyl lysine isopeptide (Lys-Gly) (interchain with G-Cter in SUMO2) cross-link involves residue Lys-48. Lys-97 is subject to N6-acetyllysine; alternate. A Glycyl lysine isopeptide (Lys-Gly) (interchain with G-Cter in SUMO2); alternate cross-link involves residue Lys-97. Residue Lys-125 forms a Glycyl lysine isopeptide (Lys-Gly) (interchain with G-Cter in SUMO2) linkage. The residue at position 217 (Lys-217) is an N6-acetyllysine. Lys-245 is covalently cross-linked (Glycyl lysine isopeptide (Lys-Gly) (interchain with G-Cter in SUMO2)).

It belongs to the eukaryotic ribosomal protein eL8 family. In terms of assembly, component of the large ribosomal subunit. Interacts with CRY1. Interacts with DICER1, AGO2, TARBP2, MOV10 and EIF6; they form a large RNA-induced silencing complex (RISC).

Its subcellular location is the cytoplasm. In terms of biological role, component of the large ribosomal subunit. The ribosome is a large ribonucleoprotein complex responsible for the synthesis of proteins in the cell. This Mus musculus (Mouse) protein is Large ribosomal subunit protein eL8 (Rpl7a).